Reading from the N-terminus, the 625-residue chain is tRNA uridine 5-carboxymethylaminomethyl modification enzyme MnmG (625 aa).

An FAD-binding site is contributed by 11–16 (GAGHAG). Position 271–285 (271–285 (GPRYCPSIETKIVTF)) interacts with NAD(+).

It belongs to the MnmG family. In terms of assembly, homodimer. Heterotetramer of two MnmE and two MnmG subunits. FAD is required as a cofactor.

Its subcellular location is the cytoplasm. NAD-binding protein involved in the addition of a carboxymethylaminomethyl (cmnm) group at the wobble position (U34) of certain tRNAs, forming tRNA-cmnm(5)s(2)U34. The protein is tRNA uridine 5-carboxymethylaminomethyl modification enzyme MnmG of Porphyromonas gingivalis (strain ATCC BAA-308 / W83).